A 125-amino-acid polypeptide reads, in one-letter code: Large ribosomal subunit protein uL22 (125 aa).

The protein belongs to the universal ribosomal protein uL22 family. In terms of assembly, part of the 50S ribosomal subunit.

Its function is as follows. This protein binds specifically to 23S rRNA; its binding is stimulated by other ribosomal proteins, e.g. L4, L17, and L20. It is important during the early stages of 50S assembly. It makes multiple contacts with different domains of the 23S rRNA in the assembled 50S subunit and ribosome. In terms of biological role, the globular domain of the protein is located near the polypeptide exit tunnel on the outside of the subunit, while an extended beta-hairpin is found that lines the wall of the exit tunnel in the center of the 70S ribosome. The sequence is that of Large ribosomal subunit protein uL22 from Novosphingobium aromaticivorans (strain ATCC 700278 / DSM 12444 / CCUG 56034 / CIP 105152 / NBRC 16084 / F199).